The primary structure comprises 87 residues: Large ribosomal subunit protein bL27 (87 aa).

The segment at 1–21 (MAHKKAGGSSRNGRDSESKRL) is disordered.

It belongs to the bacterial ribosomal protein bL27 family.

This chain is Large ribosomal subunit protein bL27, found in Aromatoleum aromaticum (strain DSM 19018 / LMG 30748 / EbN1) (Azoarcus sp. (strain EbN1)).